Reading from the N-terminus, the 95-residue chain is Protein TusB (95 aa).

Belongs to the DsrH/TusB family. In terms of assembly, heterohexamer, formed by a dimer of trimers. The hexameric TusBCD complex contains 2 copies each of TusB, TusC and TusD. The TusBCD complex interacts with TusE.

It is found in the cytoplasm. Its function is as follows. Part of a sulfur-relay system required for 2-thiolation of 5-methylaminomethyl-2-thiouridine (mnm(5)s(2)U) at tRNA wobble positions. This chain is Protein TusB, found in Escherichia coli (strain K12 / MC4100 / BW2952).